The sequence spans 648 residues: DNA gyrase subunit B (648 aa).

A Toprim domain is found at 432 to 546 (RELFIVEGNS…YGFVYLAQPP (115 aa)). The Mg(2+) site is built by Glu-438, Asp-511, and Asp-513.

This sequence belongs to the type II topoisomerase GyrB family. Heterotetramer, composed of two GyrA and two GyrB chains. In the heterotetramer, GyrA contains the active site tyrosine that forms a transient covalent intermediate with DNA, while GyrB binds cofactors and catalyzes ATP hydrolysis. Mg(2+) serves as cofactor. It depends on Mn(2+) as a cofactor. Ca(2+) is required as a cofactor.

Its subcellular location is the cytoplasm. The enzyme catalyses ATP-dependent breakage, passage and rejoining of double-stranded DNA.. Its function is as follows. A type II topoisomerase that negatively supercoils closed circular double-stranded (ds) DNA in an ATP-dependent manner to modulate DNA topology and maintain chromosomes in an underwound state. Negative supercoiling favors strand separation, and DNA replication, transcription, recombination and repair, all of which involve strand separation. Also able to catalyze the interconversion of other topological isomers of dsDNA rings, including catenanes and knotted rings. Type II topoisomerases break and join 2 DNA strands simultaneously in an ATP-dependent manner. The polypeptide is DNA gyrase subunit B (Metamycoplasma hominis (strain ATCC 23114 / DSM 25592 / NBRC 14850 / NCTC 10111 / PG21) (Mycoplasma hominis)).